A 956-amino-acid chain; its full sequence is Translation initiation factor IF-2 (956 aa).

The interval Ala68 to Asn357 is disordered. 4 stretches are compositionally biased toward low complexity: residues Ala86–Val123, Pro141–Gly156, Pro164–Pro175, and Gly212–Ala235. Composition is skewed to gly residues over residues Gly236 to Asn257 and Arg276 to Arg324. Residues Gly325–Lys334 are compositionally biased toward basic residues. Positions Ala449–Leu620 constitute a tr-type G domain. Residues Gly458–Thr465 are G1. Position 458-465 (Gly458–Thr465) interacts with GTP. The G2 stretch occupies residues Gly483–His487. A G3 region spans residues Asp508–Gly511. GTP contacts are provided by residues Asp508–His512 and Asn562–Asp565. The G4 stretch occupies residues Asn562–Asp565. Positions Ser598–Arg600 are G5.

Belongs to the TRAFAC class translation factor GTPase superfamily. Classic translation factor GTPase family. IF-2 subfamily.

It localises to the cytoplasm. In terms of biological role, one of the essential components for the initiation of protein synthesis. Protects formylmethionyl-tRNA from spontaneous hydrolysis and promotes its binding to the 30S ribosomal subunits. Also involved in the hydrolysis of GTP during the formation of the 70S ribosomal complex. The protein is Translation initiation factor IF-2 of Renibacterium salmoninarum (strain ATCC 33209 / DSM 20767 / JCM 11484 / NBRC 15589 / NCIMB 2235).